The primary structure comprises 721 residues: Ribonucleoside-diphosphate reductase subunit alpha (721 aa).

Substrate-binding positions include T168, 184–185 (SC), G213, 393–397 (NLCSE), and 595–599 (PTGSI). C185 and C422 are disulfide-bonded. N393 acts as the Proton acceptor in catalysis. The active-site Cysteine radical intermediate is the C395. E397 (proton acceptor) is an active-site residue.

Belongs to the ribonucleoside diphosphate reductase large chain family. In terms of assembly, tetramer of two alpha and two beta subunits.

It catalyses the reaction a 2'-deoxyribonucleoside 5'-diphosphate + [thioredoxin]-disulfide + H2O = a ribonucleoside 5'-diphosphate + [thioredoxin]-dithiol. Its activity is regulated as follows. Under complex allosteric control mediated by deoxynucleoside triphosphates and ATP binding. The type of nucleotide bound at the specificity site determines substrate preference. It seems probable that ATP makes the enzyme reduce CDP and UDP, dGTP favors ADP reduction and dTTP favors GDP reduction. In terms of biological role, provides the precursors necessary for DNA synthesis. Catalyzes the biosynthesis of deoxyribonucleotides from the corresponding ribonucleotides. The protein is Ribonucleoside-diphosphate reductase subunit alpha (nrdE) of Mycobacterium leprae (strain TN).